Reading from the N-terminus, the 403-residue chain is Phosphoglycerate kinase (403 aa).

Substrate is bound by residues 24–26 (DLN), Arg-39, 62–65 (HLGR), Arg-121, and Arg-161. ATP is bound by residues Lys-211, Gly-299, Glu-330, and 359 to 362 (GGDS).

It belongs to the phosphoglycerate kinase family. As to quaternary structure, monomer.

It localises to the cytoplasm. The catalysed reaction is (2R)-3-phosphoglycerate + ATP = (2R)-3-phospho-glyceroyl phosphate + ADP. Its pathway is carbohydrate degradation; glycolysis; pyruvate from D-glyceraldehyde 3-phosphate: step 2/5. This is Phosphoglycerate kinase from Rhodococcus jostii (strain RHA1).